Reading from the N-terminus, the 640-residue chain is Dextranase (640 aa).

A signal peptide spans 1–32 (MPGTGLGRLAKHVTAAAAVFLISTGAVLPAQA).

This sequence belongs to the glycosyl hydrolase 49 family.

Its subcellular location is the secreted. The catalysed reaction is Endohydrolysis of (1-&gt;6)-alpha-D-glucosidic linkages in dextran.. The polypeptide is Dextranase (Arthrobacter globiformis).